Consider the following 196-residue polypeptide: Recombination protein RecR (196 aa).

The segment at 56–71 adopts a C4-type zinc-finger fold; that stretch reads CPVCGGLDSQQPCMIC. The 95-residue stretch at 78–172 folds into the Toprim domain; the sequence is PLICVVETVA…SVTRLAQGVP (95 aa).

The protein belongs to the RecR family.

May play a role in DNA repair. It seems to be involved in an RecBC-independent recombinational process of DNA repair. It may act with RecF and RecO. This Acidiphilium cryptum (strain JF-5) protein is Recombination protein RecR.